The sequence spans 536 residues: Inactive phospholipase D5 (536 aa).

Over 1 to 68 the chain is Cytoplasmic; it reads MEIRQHEWLS…DKLEHSQQKC (68 aa). The chain crosses the membrane as a helical span at residues 69 to 89; it reads IVIFALVCCFAVLVALIFSAV. Residues 90–536 are Extracellular-facing; the sequence is DIMGEDEDGL…NATGREPLSV (447 aa). Asn121 is a glycosylation site (N-linked (GlcNAc...) asparagine). Residues 215–242 form the PLD phosphodiesterase 1 domain; it reads NKGRLQSSFWIVDKQHVYIGSAGLDWRS. Asn302 carries an N-linked (GlcNAc...) asparagine glycan. Residues 434–460 enclose the PLD phosphodiesterase 2 domain; sequence FPKLNRNKYMVTDGAAYIGNFDWVGND. Positions 503–536 are disordered; the sequence is QPTKQPNCSSLSKLKSPSKQPAMANATGREPLSV. Positions 511–521 are enriched in low complexity; the sequence is SSLSKLKSPSK.

It belongs to the phospholipase D family.

Its subcellular location is the membrane. The polypeptide is Inactive phospholipase D5 (Pld5) (Mus musculus (Mouse)).